A 330-amino-acid chain; its full sequence is Beta-ketoacyl-[acyl-carrier-protein] synthase III (330 aa).

Residues Cys118 and His257 contribute to the active site. The tract at residues 258–262 is ACP-binding; that stretch reads QANLR. Asn287 is a catalytic residue.

It belongs to the thiolase-like superfamily. FabH family. In terms of assembly, homodimer.

Its subcellular location is the cytoplasm. It carries out the reaction malonyl-[ACP] + acetyl-CoA + H(+) = 3-oxobutanoyl-[ACP] + CO2 + CoA. Its pathway is lipid metabolism; fatty acid biosynthesis. Catalyzes the condensation reaction of fatty acid synthesis by the addition to an acyl acceptor of two carbons from malonyl-ACP. Catalyzes the first condensation reaction which initiates fatty acid synthesis and may therefore play a role in governing the total rate of fatty acid production. Possesses both acetoacetyl-ACP synthase and acetyl transacylase activities. Its substrate specificity determines the biosynthesis of branched-chain and/or straight-chain of fatty acids. The chain is Beta-ketoacyl-[acyl-carrier-protein] synthase III from Nitratidesulfovibrio vulgaris (strain DSM 19637 / Miyazaki F) (Desulfovibrio vulgaris).